Here is a 194-residue protein sequence, read N- to C-terminus: Thymidine kinase (194 aa).

Residues 9-16 (GAMNSGKT) and 85-88 (DECQ) each bind ATP. The active-site Proton acceptor is E86. Positions 143, 146, 180, and 183 each coordinate Zn(2+).

Belongs to the thymidine kinase family. Homotetramer.

The protein localises to the cytoplasm. The enzyme catalyses thymidine + ATP = dTMP + ADP + H(+). This is Thymidine kinase from Enterococcus faecalis (strain ATCC 700802 / V583).